A 487-amino-acid polypeptide reads, in one-letter code: MYTMKKGKDMAKEEQETAAIEPLSPVSQLFVSPSLYCFIIFTLGFQTRCNPSTIVEGVKNTWIKLPRFSSKVEIKKNGKASWVPVSVRVEDHVVVPDLDYSNIENPDQFIEDYTSKLANTPMDMSRPLWELHLLNIKTSNAESLAIGKFHHSLGDGMSLISLLLASSRKTSDPDALPTTAATRKHASSNKKSWWLVGRFWFMIRIIFTTVVELFKYLLTLCFMRDTKTPLMGKTGDAIRSRKVIHRIVSFDDVKLVKNNMDMKVNDVLLGMTQAGLSRYLSRKYDEDMVVEKKKNLEKIRLRGTVFVNLRADTKLEDLANMMAKGSKCRWGNFVGVIIFPLWVRSEDDPLEYVRRAKSTMDIKKLSIESLICYGLIKLTRKILGGKVVETLVRRLFDHTTLTFSNVMGPDEDISFFDHPMSYVAASALGGPQALIIHYVTYVNKIVINLAVDTSVIRDPHLLCDDLVESLDIIKLAAMEKGVHKMEV.

Topologically, residues 1 to 193 are cytoplasmic; the sequence is MYTMKKGKDM…KHASSNKKSW (193 aa). Histidine 151 functions as the Proton acceptor in the catalytic mechanism. The chain crosses the membrane as a helical span at residues 194–214; it reads WLVGRFWFMIRIIFTTVVELF. Topologically, residues 215 to 487 are lumenal; the sequence is KYLLTLCFMR…MEKGVHKMEV (273 aa).

It in the N-terminal section; belongs to the long-chain O-acyltransferase family. Mostly expressed in flowers and siliques.

The protein localises to the cell membrane. It is found in the endoplasmic reticulum membrane. The catalysed reaction is an acyl-CoA + a 1,2-diacyl-sn-glycerol = a triacyl-sn-glycerol + CoA. It catalyses the reaction a long chain fatty alcohol + a fatty acyl-CoA = a wax ester + CoA. Its pathway is glycerolipid metabolism; triacylglycerol biosynthesis. It functions in the pathway lipid metabolism. Its function is as follows. Bifunctional wax ester synthase/diacylglycerol acyltransferase. Involved in cuticular wax biosynthesis. The sequence is that of Wax ester synthase/diacylglycerol acyltransferase 3 from Arabidopsis thaliana (Mouse-ear cress).